A 378-amino-acid polypeptide reads, in one-letter code: tRNA-specific 2-thiouridylase MnmA (378 aa).

Residues 7-14 and Met-33 each bind ATP; that span reads GLSGGVDS. Residues 102–104 are interaction with target base in tRNA; the sequence is NPD. Cys-107 acts as the Nucleophile in catalysis. Residues Cys-107 and Cys-209 are joined by a disulfide bond. ATP is bound at residue Gly-132. Positions 159–161 are interaction with tRNA; sequence KDQ. The Cysteine persulfide intermediate role is filled by Cys-209. Positions 316-317 are interaction with tRNA; sequence RY.

The protein belongs to the MnmA/TRMU family.

It localises to the cytoplasm. It carries out the reaction S-sulfanyl-L-cysteinyl-[protein] + uridine(34) in tRNA + AH2 + ATP = 2-thiouridine(34) in tRNA + L-cysteinyl-[protein] + A + AMP + diphosphate + H(+). Its function is as follows. Catalyzes the 2-thiolation of uridine at the wobble position (U34) of tRNA, leading to the formation of s(2)U34. The sequence is that of tRNA-specific 2-thiouridylase MnmA from Onion yellows phytoplasma (strain OY-M).